The sequence spans 170 residues: MVDTTKNTKLFTSYGVTTSKAVNPDMVAKMISKAKRPLFVVGTGVLRPEVLDRAVKIAQKANIPIAATGSSLKGFLDKGVDAKYINLHQLGFYLTDPAWPGLDGKGNYDTIIVLEFKKYYINQVLSGTKNFSNVKAISIGRDYIQNATMSFGNISREDHYAALDELIDNL.

The protein belongs to the CdhB family. In terms of assembly, heterotetramer of two alpha and two epsilon subunits. The ACDS complex is made up of alpha, epsilon, beta, gamma and delta subunits with a probable stoichiometry of (alpha(2)epsilon(2))(4)-beta(8)-(gamma(1)delta(1))(8).

The protein operates within one-carbon metabolism; methanogenesis from acetate. Functionally, part of a complex that catalyzes the reversible cleavage of acetyl-CoA, allowing growth on acetate as sole source of carbon and energy. The alpha-epsilon subcomponent functions as a carbon monoxide dehydrogenase. The precise role of the epsilon subunit is unclear; it may have a stabilizing role within the alpha(2)epsilon(2) component and/or be involved in electron transfer to FAD during a potential FAD-mediated CO oxidation. The protein is Acetyl-CoA decarbonylase/synthase complex subunit epsilon 1 (cdhB1) of Methanosarcina mazei (strain ATCC BAA-159 / DSM 3647 / Goe1 / Go1 / JCM 11833 / OCM 88) (Methanosarcina frisia).